We begin with the raw amino-acid sequence, 235 residues long: Sugar fermentation stimulation protein homolog (235 aa).

The protein belongs to the SfsA family.

This Aliivibrio fischeri (strain ATCC 700601 / ES114) (Vibrio fischeri) protein is Sugar fermentation stimulation protein homolog.